Reading from the N-terminus, the 132-residue chain is Small ribosomal subunit protein uS11 (132 aa).

Belongs to the universal ribosomal protein uS11 family. As to quaternary structure, part of the 30S ribosomal subunit. Interacts with proteins S7 and S18. Binds to IF-3.

Functionally, located on the platform of the 30S subunit, it bridges several disparate RNA helices of the 16S rRNA. Forms part of the Shine-Dalgarno cleft in the 70S ribosome. The chain is Small ribosomal subunit protein uS11 from Clostridioides difficile (strain 630) (Peptoclostridium difficile).